The primary structure comprises 248 residues: 2,3-bisphosphoglycerate-dependent phosphoglycerate mutase (248 aa).

Substrate contacts are provided by residues 8 to 15 (RHGESEWN), 21 to 22 (TG), R60, 87 to 90 (ERHY), K98, 114 to 115 (RR), and 183 to 184 (GN). The active-site Tele-phosphohistidine intermediate is H9. Catalysis depends on E87, which acts as the Proton donor/acceptor.

This sequence belongs to the phosphoglycerate mutase family. BPG-dependent PGAM subfamily.

It catalyses the reaction (2R)-2-phosphoglycerate = (2R)-3-phosphoglycerate. It functions in the pathway carbohydrate degradation; glycolysis; pyruvate from D-glyceraldehyde 3-phosphate: step 3/5. In terms of biological role, catalyzes the interconversion of 2-phosphoglycerate and 3-phosphoglycerate. This is 2,3-bisphosphoglycerate-dependent phosphoglycerate mutase from Borrelia hermsii (strain HS1 / DAH).